Reading from the N-terminus, the 503-residue chain is Probable cytosol aminopeptidase (503 aa).

Residues lysine 274 and aspartate 279 each contribute to the Mn(2+) site. Residue lysine 286 is part of the active site. Aspartate 297, aspartate 356, and glutamate 358 together coordinate Mn(2+). Arginine 360 is an active-site residue.

Belongs to the peptidase M17 family. Mn(2+) is required as a cofactor.

The protein resides in the cytoplasm. It catalyses the reaction Release of an N-terminal amino acid, Xaa-|-Yaa-, in which Xaa is preferably Leu, but may be other amino acids including Pro although not Arg or Lys, and Yaa may be Pro. Amino acid amides and methyl esters are also readily hydrolyzed, but rates on arylamides are exceedingly low.. The enzyme catalyses Release of an N-terminal amino acid, preferentially leucine, but not glutamic or aspartic acids.. Functionally, presumably involved in the processing and regular turnover of intracellular proteins. Catalyzes the removal of unsubstituted N-terminal amino acids from various peptides. This Burkholderia pseudomallei (strain 1710b) protein is Probable cytosol aminopeptidase.